A 367-amino-acid polypeptide reads, in one-letter code: Flagellar P-ring protein (367 aa).

The N-terminal stretch at 1–21 (MYVFKALAGIVLALVATLAHA) is a signal peptide.

Belongs to the FlgI family. The basal body constitutes a major portion of the flagellar organelle and consists of four rings (L,P,S, and M) mounted on a central rod.

The protein localises to the periplasm. Its subcellular location is the bacterial flagellum basal body. Functionally, assembles around the rod to form the L-ring and probably protects the motor/basal body from shearing forces during rotation. In Salmonella arizonae (strain ATCC BAA-731 / CDC346-86 / RSK2980), this protein is Flagellar P-ring protein.